We begin with the raw amino-acid sequence, 490 residues long: GTPase Der (490 aa).

EngA-type G domains follow at residues 3–166 (PVVA…MEDL) and 203–376 (IKLA…DSST). Residues 9–16 (GRPNVGKS), 56–60 (DTGGI), 118–121 (NKTD), 209–216 (GRPNVGKS), 256–260 (DTAGV), and 321–324 (NKWD) each bind GTP. Residues 377–461 (RRVGTSMLTR…PIRIQFKEGE (85 aa)) form the KH-like domain.

It belongs to the TRAFAC class TrmE-Era-EngA-EngB-Septin-like GTPase superfamily. EngA (Der) GTPase family. As to quaternary structure, associates with the 50S ribosomal subunit.

GTPase that plays an essential role in the late steps of ribosome biogenesis. This Shigella flexneri serotype 5b (strain 8401) protein is GTPase Der.